The chain runs to 311 residues: MGSAARQPLFSFGVIADVQYADISDGRSFLGVPRYYRNSILVLQRAVETWNQHGNLKFVINMGDIVDGFCPKDQSLAATKKLVHEFEKFNGPVYHMIGNHCLYNLPREELLPLLKIPGRDGNAYYDFSPTPEYRVVVLDGYDISAVGWPQEHPNTIAALKILEEKNPNTDKNSPAGLEDVARRFVKYNGGVGEKQLQWLDSVLQDASNSNQRVIVCGHVPMSPGVASKAALLWNFDEVMNIIHKYDSVKVCLSGHDHKGGYFVDSHGVHHRSLEAALECPPGTYSFGYIDVYDNKLSLVGTDRMQSTDFEN.

Zn(2+)-binding residues include aspartate 17, glutamine 19, aspartate 64, asparagine 99, histidine 218, histidine 255, and histidine 257.

It belongs to the ADPRibase-Mn family. As to quaternary structure, monomer. Mg(2+) is required as a cofactor.

It carries out the reaction CDP-choline + H2O = phosphocholine + CMP + 2 H(+). The enzyme catalyses ADP-D-ribose + H2O = D-ribose 5-phosphate + AMP + 2 H(+). The catalysed reaction is CDP-glycerol + H2O = sn-glycerol 3-phosphate + CMP + 2 H(+). In terms of biological role, hydrolyzes ADP-ribose, IDP-ribose, CDP-glycerol, CDP-choline and CDP-ethanolamine, but not other non-reducing ADP-sugars or CDP-glucose. This is Manganese-dependent ADP-ribose/CDP-alcohol diphosphatase from Arabidopsis thaliana (Mouse-ear cress).